A 365-amino-acid chain; its full sequence is tRNA-specific 2-thiouridylase MnmA (365 aa).

Residues 14–21 and L40 each bind ATP; that span reads AMSGGVDS. Residue C108 is the Nucleophile of the active site. C108 and C204 are joined by a disulfide. ATP is bound at residue G132. The interval 154-156 is interaction with tRNA; it reads KDQ. C204 functions as the Cysteine persulfide intermediate in the catalytic mechanism.

Belongs to the MnmA/TRMU family.

It is found in the cytoplasm. The enzyme catalyses S-sulfanyl-L-cysteinyl-[protein] + uridine(34) in tRNA + AH2 + ATP = 2-thiouridine(34) in tRNA + L-cysteinyl-[protein] + A + AMP + diphosphate + H(+). In terms of biological role, catalyzes the 2-thiolation of uridine at the wobble position (U34) of tRNA, leading to the formation of s(2)U34. The chain is tRNA-specific 2-thiouridylase MnmA from Rickettsia akari (strain Hartford).